A 317-amino-acid polypeptide reads, in one-letter code: Malate dehydrogenase (317 aa).

Residues 13-18 (GAGNIG) and Asp-38 each bind NAD(+). Residues Arg-87 and Arg-93 each contribute to the substrate site. Residues Asn-100 and 123 to 125 (VTN) contribute to the NAD(+) site. 2 residues coordinate substrate: Asn-125 and Arg-156. His-180 (proton acceptor) is an active-site residue.

Belongs to the LDH/MDH superfamily. MDH type 3 family.

It carries out the reaction (S)-malate + NAD(+) = oxaloacetate + NADH + H(+). Its function is as follows. Catalyzes the reversible oxidation of malate to oxaloacetate. In Anaplasma marginale (strain St. Maries), this protein is Malate dehydrogenase.